Here is a 550-residue protein sequence, read N- to C-terminus: Glucose-6-phosphate isomerase (550 aa).

Catalysis depends on Glu356, which acts as the Proton donor. Residues His387 and Lys515 contribute to the active site.

This sequence belongs to the GPI family.

It localises to the cytoplasm. The enzyme catalyses alpha-D-glucose 6-phosphate = beta-D-fructose 6-phosphate. It functions in the pathway carbohydrate biosynthesis; gluconeogenesis. Its pathway is carbohydrate degradation; glycolysis; D-glyceraldehyde 3-phosphate and glycerone phosphate from D-glucose: step 2/4. Functionally, catalyzes the reversible isomerization of glucose-6-phosphate to fructose-6-phosphate. This chain is Glucose-6-phosphate isomerase, found in Vibrio campbellii (strain ATCC BAA-1116).